Reading from the N-terminus, the 370-residue chain is D-alanine--D-alanine ligase (370 aa).

An ATP-grasp domain is found at 144–352 (KKIFADAGIP…YGALIERLVD (209 aa)). Position 177-232 (177-232 (EEVLTYPVFVKPANLGSSVGISKATNKKELADAMTEAFLYDRRVVVEQGVVAREIE)) interacts with ATP. Mg(2+) contacts are provided by Asp-306, Glu-319, and Asn-321.

The protein belongs to the D-alanine--D-alanine ligase family. Mg(2+) is required as a cofactor. The cofactor is Mn(2+).

It localises to the cytoplasm. The catalysed reaction is 2 D-alanine + ATP = D-alanyl-D-alanine + ADP + phosphate + H(+). It participates in cell wall biogenesis; peptidoglycan biosynthesis. Its function is as follows. Cell wall formation. The sequence is that of D-alanine--D-alanine ligase from Listeria monocytogenes serotype 4b (strain F2365).